We begin with the raw amino-acid sequence, 270 residues long: Phospholysine phosphohistidine inorganic pyrophosphate phosphatase (270 aa).

Residues aspartate 17 and serine 19 each coordinate Mg(2+). Residues 17–19 (DIS), 54–55 (TN), and lysine 189 contribute to the substrate site. Aspartate 214 contributes to the Mg(2+) binding site.

It belongs to the HAD-like hydrolase superfamily. In terms of assembly, homodimer. It depends on Mg(2+) as a cofactor. In terms of tissue distribution, expressed in brain, and at lower levels in liver and kidney. Detected in thyroid (at protein level). Expressed in liver, kidney and moderately in brain.

It is found in the cytoplasm. Its subcellular location is the nucleus. The catalysed reaction is diphosphate + H2O = 2 phosphate + H(+). In terms of biological role, phosphatase that hydrolyzes imidodiphosphate, 3-phosphohistidine and 6-phospholysine. Has broad substrate specificity and can also hydrolyze inorganic diphosphate, but with lower efficiency. The protein is Phospholysine phosphohistidine inorganic pyrophosphate phosphatase (LHPP) of Homo sapiens (Human).